The chain runs to 935 residues: Protein HIRA (935 aa).

WD repeat units lie at residues 14-58, 72-111, 131-170, 174-213, 222-261, 277-320, and 325-362; these read HDTG…DKKK, ESQS…NSMG, GHSM…DRIT, DIQL…CVKS, IEET…QTWK, RAMP…KPLF, and IFNH…IGEM. The segment at 431 to 556 is disordered; sequence SSDIQLTKSM…RNKKRKVPAT (126 aa). The segment covering 439–468 has biased composition (basic and acidic residues); that stretch reads SMEDNSKENESKNSEKTMMEERNKQIDVRK. Positions 480 to 492 are enriched in polar residues; sequence GTTTADPMTSLSS. Positions 520–542 are enriched in acidic residues; it reads DLEDSSDSDDDDEEEEEDMEISD.

It belongs to the WD repeat HIR1 family.

It localises to the nucleus. Its function is as follows. Required for replication-independent chromatin assembly and for the periodic repression of histone gene transcription during the cell cycle. This is Protein HIRA from Caenorhabditis elegans.